Consider the following 123-residue polypeptide: Large ribosomal subunit protein bL12 (123 aa).

It belongs to the bacterial ribosomal protein bL12 family. As to quaternary structure, homodimer. Part of the ribosomal stalk of the 50S ribosomal subunit. Forms a multimeric L10(L12)X complex, where L10 forms an elongated spine to which 2 to 4 L12 dimers bind in a sequential fashion. Binds GTP-bound translation factors.

Its function is as follows. Forms part of the ribosomal stalk which helps the ribosome interact with GTP-bound translation factors. Is thus essential for accurate translation. This Clostridium kluyveri (strain NBRC 12016) protein is Large ribosomal subunit protein bL12.